Here is a 376-residue protein sequence, read N- to C-terminus: Sterol 24-C-methyltransferase (376 aa).

Belongs to the class I-like SAM-binding methyltransferase superfamily. Erg6/SMT family.

The enzyme catalyses zymosterol + S-adenosyl-L-methionine = fecosterol + S-adenosyl-L-homocysteine + H(+). It participates in steroid metabolism; ergosterol biosynthesis; ergosterol from zymosterol: step 1/5. Its activity is regulated as follows. Substrate analogs 25-azalanosterol and 24(R,S),25-epiminolanosterol act as inhibitors. Functionally, sterol 24-C-methyltransferase; part of the third module of ergosterol biosynthesis pathway that includes the late steps of the pathway. ERG6 catalyzes the methyl transfer from S-adenosyl-methionine to the C-24 of zymosterol to form fecosterol. The third module or late pathway involves the ergosterol synthesis itself through consecutive reactions that mainly occur in the endoplasmic reticulum (ER) membrane. Firstly, the squalene synthase ERG9 catalyzes the condensation of 2 farnesyl pyrophosphate moieties to form squalene, which is the precursor of all steroids. Squalene synthase is crucial for balancing the incorporation of farnesyl diphosphate (FPP) into sterol and nonsterol isoprene synthesis. Secondly, the squalene epoxidase ERG1 catalyzes the stereospecific oxidation of squalene to (S)-2,3-epoxysqualene, which is considered to be a rate-limiting enzyme in steroid biosynthesis. Then, the lanosterol synthase ERG7 catalyzes the cyclization of (S)-2,3 oxidosqualene to lanosterol, a reaction that forms the sterol core. In the next steps, lanosterol is transformed to zymosterol through a complex process involving various demethylation, reduction and desaturation reactions. The lanosterol 14-alpha-demethylase ERG11 (also known as CYP51) catalyzes C14-demethylation of lanosterol to produce 4,4'-dimethyl cholesta-8,14,24-triene-3-beta-ol, which is critical for ergosterol biosynthesis. The C-14 reductase ERG24 reduces the C14=C15 double bond of 4,4-dimethyl-cholesta-8,14,24-trienol to produce 4,4-dimethyl-cholesta-8,24-dienol. 4,4-dimethyl-cholesta-8,24-dienol is substrate of the C-4 demethylation complex ERG25-ERG26-ERG27 in which ERG25 catalyzes the three-step monooxygenation required for the demethylation of 4,4-dimethyl and 4alpha-methylsterols, ERG26 catalyzes the oxidative decarboxylation that results in a reduction of the 3-beta-hydroxy group at the C-3 carbon to an oxo group, and ERG27 is responsible for the reduction of the keto group on the C-3. ERG28 has a role as a scaffold to help anchor ERG25, ERG26 and ERG27 to the endoplasmic reticulum and ERG29 regulates the activity of the iron-containing C4-methylsterol oxidase ERG25. Then, the sterol 24-C-methyltransferase ERG6 catalyzes the methyl transfer from S-adenosyl-methionine to the C-24 of zymosterol to form fecosterol. The C-8 sterol isomerase ERG2 catalyzes the reaction which results in unsaturation at C-7 in the B ring of sterols and thus converts fecosterol to episterol. The sterol-C5-desaturase ERG3 then catalyzes the introduction of a C-5 double bond in the B ring to produce 5-dehydroepisterol. The C-22 sterol desaturase ERG5 further converts 5-dehydroepisterol into ergosta-5,7,22,24(28)-tetraen-3beta-ol by forming the C-22(23) double bond in the sterol side chain. Finally, ergosta-5,7,22,24(28)-tetraen-3beta-ol is substrate of the C-24(28) sterol reductase ERG4 to produce ergosterol. This chain is Sterol 24-C-methyltransferase, found in Candida albicans (strain SC5314 / ATCC MYA-2876) (Yeast).